A 117-amino-acid chain; its full sequence is Large ribosomal subunit protein bL19 (117 aa).

The protein belongs to the bacterial ribosomal protein bL19 family.

In terms of biological role, this protein is located at the 30S-50S ribosomal subunit interface and may play a role in the structure and function of the aminoacyl-tRNA binding site. This Thermotoga neapolitana (strain ATCC 49049 / DSM 4359 / NBRC 107923 / NS-E) protein is Large ribosomal subunit protein bL19.